Reading from the N-terminus, the 300-residue chain is Protoheme IX farnesyltransferase (300 aa).

Transmembrane regions (helical) follow at residues 24 to 44 (VTQL…PGMV), 46 to 66 (WHVL…AFAI), 94 to 114 (PQIL…LYTF), 118 to 138 (LTMW…TLLL), 146 to 166 (IVIG…AVTG), 172 to 192 (AWIL…VLAL), 217 to 237 (LHIL…FISG), 239 to 259 (SGAV…AYAW), and 278 to 298 (IVYL…RPLL).

This sequence belongs to the UbiA prenyltransferase family. Protoheme IX farnesyltransferase subfamily.

It localises to the cell inner membrane. It catalyses the reaction heme b + (2E,6E)-farnesyl diphosphate + H2O = Fe(II)-heme o + diphosphate. It participates in porphyrin-containing compound metabolism; heme O biosynthesis; heme O from protoheme: step 1/1. Converts heme B (protoheme IX) to heme O by substitution of the vinyl group on carbon 2 of heme B porphyrin ring with a hydroxyethyl farnesyl side group. This is Protoheme IX farnesyltransferase from Burkholderia cenocepacia (strain HI2424).